The following is a 344-amino-acid chain: Protein RecA (344 aa).

Residue 65 to 72 coordinates ATP; that stretch reads GPESSGKT. The span at 323-337 shows a compositional bias: basic and acidic residues; it reads ELREKFQPAEAPREA. Residues 323-344 are disordered; it reads ELREKFQPAEAPREAGDDEDKE.

Belongs to the RecA family.

It is found in the cytoplasm. Its function is as follows. Can catalyze the hydrolysis of ATP in the presence of single-stranded DNA, the ATP-dependent uptake of single-stranded DNA by duplex DNA, and the ATP-dependent hybridization of homologous single-stranded DNAs. It interacts with LexA causing its activation and leading to its autocatalytic cleavage. In Xanthomonas euvesicatoria pv. vesicatoria (strain 85-10) (Xanthomonas campestris pv. vesicatoria), this protein is Protein RecA.